The primary structure comprises 141 residues: Cytochrome c-type biogenesis protein CcmE (141 aa).

At 1 to 7 (MRARTRR) the chain is on the cytoplasmic side. Residues 8 to 28 (LYTFGIAAALIVAAAALAFFA) form a helical; Signal-anchor for type II membrane protein membrane-spanning segment. Over 29 to 141 (LRENANLFYT…RELKPLEAGG (113 aa)) the chain is Periplasmic. Residues H125 and Y129 each contribute to the heme site.

The protein belongs to the CcmE/CycJ family.

It localises to the cell inner membrane. Functionally, heme chaperone required for the biogenesis of c-type cytochromes. Transiently binds heme delivered by CcmC and transfers the heme to apo-cytochromes in a process facilitated by CcmF and CcmH. This is Cytochrome c-type biogenesis protein CcmE from Hyphomonas neptunium (strain ATCC 15444).